A 65-amino-acid polypeptide reads, in one-letter code: DNA gyrase inhibitor YacG (65 aa).

Residues Cys10, Cys13, Cys29, and Cys33 each contribute to the Zn(2+) site. Residues 45–65 form a disordered region; it reads EKAIPGAPDMSDSDGWSEDQY. Acidic residues predominate over residues 55–65; it reads SDSDGWSEDQY.

This sequence belongs to the DNA gyrase inhibitor YacG family. Interacts with GyrB. Zn(2+) serves as cofactor.

Functionally, inhibits all the catalytic activities of DNA gyrase by preventing its interaction with DNA. Acts by binding directly to the C-terminal domain of GyrB, which probably disrupts DNA binding by the gyrase. This is DNA gyrase inhibitor YacG from Vibrio cholerae serotype O1 (strain ATCC 39315 / El Tor Inaba N16961).